Here is a 718-residue protein sequence, read N- to C-terminus: Polyribonucleotide nucleotidyltransferase (718 aa).

Mg(2+)-binding residues include Asp-487 and Asp-493. Positions 554–613 (PRIETFKIPTDKIREVIGTGGKVIREIVEKTGAKVNIEDDGTVKVASSDGESIKAAIKWI) constitute a KH domain. The S1 motif domain occupies 623–691 (GEIYEGTVVK…DRGKTRLSMR (69 aa)). Residues 694–718 (DQETGEDLEAKQKAEGEAPAQATGE) are disordered.

The protein belongs to the polyribonucleotide nucleotidyltransferase family. Mg(2+) serves as cofactor.

The protein resides in the cytoplasm. The catalysed reaction is RNA(n+1) + phosphate = RNA(n) + a ribonucleoside 5'-diphosphate. In terms of biological role, involved in mRNA degradation. Catalyzes the phosphorolysis of single-stranded polyribonucleotides processively in the 3'- to 5'-direction. In Rhodopseudomonas palustris (strain HaA2), this protein is Polyribonucleotide nucleotidyltransferase.